Reading from the N-terminus, the 464-residue chain is Centrosomal protein of 55 kDa (464 aa).

Residues Met1–Lys11 show a composition bias toward basic and acidic residues. The disordered stretch occupies residues Met1–Thr26. Coiled-coil stretches lie at residues Lys22–Val186, Asn238–Thr337, and Gln374–Phe403. Ser96 is subject to Phosphoserine. Residues Pro157–Cys236 are interaction with TSG101. Residues Phe160–His214 form an interaction with PDCD6IP region. Positions Gln355–Lys464 are required for localization to the interphase centrosome and to the midbody during cytokinesis. Phosphoserine; by CDK1 and MAPK1 is present on residues Ser425 and Ser428. Position 430 is a phosphothreonine (Thr430). Phosphoserine; by PLK1 is present on Ser436.

Homodimer. Interacts (phosphorylated on Ser-425 and Ser-428) with PLK1; the interaction is indirect via the MTMR3:MTMR4 heterooligomer, occurs during early mitosis, regulates the phosphorylation of CEP55 by PLK1 and its recruitment to the midbody where it can mediate cell abscission. Interacts with AKAP9/CG-NAP; the interaction occurs in interphase and is lost upon mitotic entry. Interacts with PCNT/Kendrin; the interaction occurs in interphase and is lost upon mitotic entry. Directly interacts with PDCD6IP; this interaction is required for PDCD6IP targeting to the midbody; CEP55 binds PDCD6IP in a 2:1 stoichiometry; PDCD6IP competes with TSG101 for the same binding site. Interacts with TSG101; TSG101 competes with PDCD6IP for the same binding site; interaction is required for cytokinesis but not for viral budding. Interacts with MVB12A, VPS37B, VPS37C and VPS28. There is a hierachy of phosphorylation, where both Ser-425 and Ser-428 are phosphorylated at the onset of mitosis, prior to Ser-436. Phosphorylation at Ser-425 and Ser-428 is required for dissociation from the centrosome at the G2/M boundary. Phosphorylation at the 3 sites, Ser-425, Ser-428 and Ser-436, is required for protein function at the final stages of cell division to complete cytokinesis successfully. As to expression, expressed in embryonic brain. Expressed in fetal brain ganglionic eminence, kidney tubules and multinucleate neurons in the temporal cortex. Expressed in adult brain, cerebellum, kidney tubules, intestine and muscles (at protein level). Widely expressed, mostly in proliferative tissues. Highly expressed in testis. Intermediate levels in adult and fetal thymus, as well as in various cancer cell lines. Low levels in different parts of the digestive tract, bone marrow, lymph nodes, placenta, fetal heart and fetal spleen. Hardly detected in brain.

The protein localises to the cytoplasm. The protein resides in the cytoskeleton. It is found in the microtubule organizing center. Its subcellular location is the centrosome. It localises to the centriole. The protein localises to the cleavage furrow. The protein resides in the midbody. It is found in the midbody ring. Plays a role in mitotic exit and cytokinesis. Recruits PDCD6IP and TSG101 to midbody during cytokinesis. Required for successful completion of cytokinesis. Not required for microtubule nucleation. Plays a role in the development of the brain and kidney. This chain is Centrosomal protein of 55 kDa, found in Homo sapiens (Human).